The chain runs to 81 residues: Sulfur carrier protein TusA (81 aa).

Cys19 serves as the catalytic Cysteine persulfide intermediate.

Belongs to the sulfur carrier protein TusA family. In terms of assembly, interacts with IscS.

The protein resides in the cytoplasm. The protein operates within tRNA modification. In terms of biological role, sulfur carrier protein involved in sulfur trafficking in the cell. Part of a sulfur-relay system required for 2-thiolation during synthesis of 2-thiouridine of the modified wobble base 5-methylaminomethyl-2-thiouridine (mnm(5)s(2)U) in tRNA. Interacts with IscS and stimulates its cysteine desulfurase activity. Accepts an activated sulfur from IscS, which is then transferred to TusD, and thus determines the direction of sulfur flow from IscS to 2-thiouridine formation. Also appears to be involved in sulfur transfer for the biosynthesis of molybdopterin. In Salmonella choleraesuis (strain SC-B67), this protein is Sulfur carrier protein TusA.